Here is a 212-residue protein sequence, read N- to C-terminus: Pyridoxine/pyridoxamine 5'-phosphate oxidase (212 aa).

Residues 7–10 (RRQY) and Lys65 contribute to the substrate site. FMN is bound by residues 60 to 65 (RIVLLK), 75 to 76 (FT), Arg81, Lys82, and Gln104. Substrate is bound by residues Tyr122, Arg126, and Ser130. Residues 139–140 (QS) and Trp184 contribute to the FMN site. 190-192 (RLH) is a substrate binding site. Arg194 is an FMN binding site.

Belongs to the pyridoxamine 5'-phosphate oxidase family. In terms of assembly, homodimer. It depends on FMN as a cofactor.

It catalyses the reaction pyridoxamine 5'-phosphate + O2 + H2O = pyridoxal 5'-phosphate + H2O2 + NH4(+). It carries out the reaction pyridoxine 5'-phosphate + O2 = pyridoxal 5'-phosphate + H2O2. The protein operates within cofactor metabolism; pyridoxal 5'-phosphate salvage; pyridoxal 5'-phosphate from pyridoxamine 5'-phosphate: step 1/1. It participates in cofactor metabolism; pyridoxal 5'-phosphate salvage; pyridoxal 5'-phosphate from pyridoxine 5'-phosphate: step 1/1. Its function is as follows. Catalyzes the oxidation of either pyridoxine 5'-phosphate (PNP) or pyridoxamine 5'-phosphate (PMP) into pyridoxal 5'-phosphate (PLP). The protein is Pyridoxine/pyridoxamine 5'-phosphate oxidase of Alteromonas mediterranea (strain DSM 17117 / CIP 110805 / LMG 28347 / Deep ecotype).